The chain runs to 450 residues: MSLRLPSGSRRAGPRPTTGSLRLSGAGASFGAGNACSMPGIGSSFSCAFGSSSSGGNALGGNPCAGFTMNEGGLLSGNEKVTMQNLNDRLASYLENVRALEEANADLEQKIKGWYEKFGPGSCRGLDHDYSRYLPIIEDLKNQIIASTTSNANAVLQIDNARLTADVFRLKYENELALHQSVESDVNGLRRVLDVITLCRTDLEIQYETLSEELTYLKKNHKEEMQVLQCAAGGNVNVEMNAAPGVDLTVLLNNMRAEYEALAEQNRRDAEAWFNEKSASLQQQITEDVGATTSARNELTEMKRNLQTLEIELQSLLATKHSLECSLTETEGNYCAQLAQVQAQIGALEEQLHQVRTETEGQKLEYEQLLDIKVHLEKEIETYCLLIGGDDGACKSGGYKSKDYAAGNMGNQMKDPIRAIVVKKVLEEVDQRSKVLTTRLHSLEEKSQSN.

A disordered region spans residues 1–24; it reads MSLRLPSGSRRAGPRPTTGSLRLS. A head region spans residues 1 to 78; it reads MSLRLPSGSR…MNEGGLLSGN (78 aa). A coil 1A region spans residues 79 to 114; that stretch reads EKVTMQNLNDRLASYLENVRALEEANADLEQKIKGW. The IF rod domain maps to 79 to 394; that stretch reads EKVTMQNLND…LLIGGDDGAC (316 aa). A linker 1 region spans residues 115 to 136; sequence YEKFGPGSCRGLDHDYSRYLPI. The tract at residues 137–228 is coil 1B; the sequence is IEDLKNQIIA…KNHKEEMQVL (92 aa). The linker 12 stretch occupies residues 229 to 251; it reads QCAAGGNVNVEMNAAPGVDLTVL. The interval 252 to 390 is coil 2; sequence LNNMRAEYEA…ETYCLLIGGD (139 aa). Positions 391–450 are tail; that stretch reads DGACKSGGYKSKDYAAGNMGNQMKDPIRAIVVKKVLEEVDQRSKVLTTRLHSLEEKSQSN. S442 is subject to Phosphoserine.

The protein belongs to the intermediate filament family. As to quaternary structure, heterodimer of a type I and a type II keratin. Heterodimer with type II keratin KRT5 leading to the formation of keratin intermediate filament (KIF) network. Interacts with KRT6A to form filaments. As to expression, expressed in skin and wool follicle. Expression localized to the inner root sheath of wool follicle.

It is found in the cytoplasm. Its function is as follows. Essential for the proper assembly of type I and type II keratin protein complexes and formation of keratin intermediate filaments in the inner root sheath (irs). Plays a role in the cytoskeleton organization. In Ovis aries (Sheep), this protein is Keratin, type I cytoskeletal 25.